A 336-amino-acid polypeptide reads, in one-letter code: DNA-directed RNA polymerase subunit alpha (336 aa).

The interval methionine 1–glutamate 238 is alpha N-terminal domain (alpha-NTD). Residues alanine 267–glutamine 336 are alpha C-terminal domain (alpha-CTD).

Belongs to the RNA polymerase alpha chain family. In plastids the minimal PEP RNA polymerase catalytic core is composed of four subunits: alpha, beta, beta', and beta''. When a (nuclear-encoded) sigma factor is associated with the core the holoenzyme is formed, which can initiate transcription.

The protein resides in the plastid. It localises to the chloroplast. The enzyme catalyses RNA(n) + a ribonucleoside 5'-triphosphate = RNA(n+1) + diphosphate. Its function is as follows. DNA-dependent RNA polymerase catalyzes the transcription of DNA into RNA using the four ribonucleoside triphosphates as substrates. This is DNA-directed RNA polymerase subunit alpha from Huperzia lucidula (Shining clubmoss).